A 412-amino-acid polypeptide reads, in one-letter code: uncharacterized protein (412 aa).

His49 lines the Zn(2+) pocket. Catalysis depends on Glu52, which acts as the Proton acceptor. Zn(2+) contacts are provided by His53 and Glu129.

Belongs to the peptidase M16 family. The cofactor is Zn(2+).

This is an uncharacterized protein from Rickettsia typhi (strain ATCC VR-144 / Wilmington).